We begin with the raw amino-acid sequence, 1166 residues long: Calcium-activated potassium channel subunit alpha-1 (1166 aa).

The segment covering 1-15 (MANGGGGGGGGGGGS) has biased composition (gly residues). 2 disordered regions span residues 1–20 (MANGGGGGGGGGGGSSLRMS) and 30–51 (LDASSSSSSSSSSSSSSSSVHE). Residues 1-74 (MANGGGGGGG…VPCDSRGQRM (74 aa)) are Extracellular-facing. Residues 33–48 (SSSSSSSSSSSSSSSS) show a composition bias toward low complexity. The helical transmembrane segment at 75-95 (WWAFLASSMVTFFGGLFIILL) threads the bilayer. Over 96–166 (WRTLKYLWTV…MISAQTLTGR (71 aa)) the chain is Cytoplasmic. 3 S-palmitoyl cysteine lipidation sites follow: Cys-106, Cys-107, and Cys-109. Residue Thr-139 is modified to Phosphothreonine; by CamK2. Residues 167-187 (VLVVLVFALSIGALVIYFIDS) traverse the membrane as a helical segment. At 188–202 (SNPIESCQNFYKDFT) the chain is on the extracellular side. A helical membrane pass occupies residues 203 to 223 (LQIDMAFNVFFLLYFGLRFIA). The Cytoplasmic segment spans residues 224–227 (ANDK). A helical membrane pass occupies residues 228 to 248 (LWFWLEVNSVVDFFTVPPVFV). The Extracellular segment spans residues 249–252 (SVYL). A helical; Voltage-sensor membrane pass occupies residues 253–273 (NRSWLGLRFLRALRLIQFSEI). Residues 274–288 (LQFLNILKTSNSIKL) lie on the Cytoplasmic side of the membrane. The chain crosses the membrane as a helical span at residues 289–309 (VNLLSIFISTWLTAAGFIHLV). Residues 310–323 (ENSGDPWENFQNNQ) are Extracellular-facing. An intramembrane region (pore-forming) is located at residues 324–346 (ALTYWECVYLLMVTMSTVGYGDV). The Selectivity for potassium motif lies at 340 to 343 (TVGY). The Extracellular portion of the chain corresponds to 347-355 (YAKTTLGRL). The chain crosses the membrane as a helical span at residues 356-376 (FMVFFILGGLAMFASYVPEII). At 377–1166 (ELIGNRKKYG…KQKYVQEERL (790 aa)) the chain is on the cytoplasmic side. The 143-residue stretch at 395-537 (RKHIVVCGHI…WNWKEGDDAI (143 aa)) folds into the RCK N-terminal 1 domain. Mg(2+)-binding residues include Glu-427, Gln-450, and Glu-452. The segment at 544-564 (LGFIAQSCLAQGLSTMLANLF) is segment S7. The segment S8 stretch occupies residues 601-621 (LSFPTVCELCFVKLKLLMIAI). Residues 665 to 669 (CKACH) are heme-binding motif. Residues 689 to 717 (EQPSTLSPKKKQRNGGMRNSPSSSPKLMR) form a disordered region. Thr-693 carries the post-translational modification Phosphothreonine. Phosphoserine occurs at positions 695, 708, and 712. The tract at residues 767–787 (VLSGHVVVCIFGDVSSALIGL) is segment S9. The region spanning 769–913 (SGHVVVCIFG…MDRSSPDNSP (145 aa)) is the RCK N-terminal 2 domain. Residue Thr-900 is modified to Phosphothreonine. 2 positions are modified to phosphoserine: Ser-908 and Ser-912. A Calcium bowl motif is present at residues 933 to 955 (TELVNDTNVQFLDQDDDDDPDTE). Residues Gln-942, Asp-945, Asp-948, and Asp-950 each contribute to the Ca(2+) site. The segment S10 stretch occupies residues 962-982 (FACGTAFAVSVLDSLMSATYF). The segment covering 1116–1141 (RASLSHSSHSSQSSSKKSSSVHSIPS) has biased composition (low complexity). The interval 1116–1166 (RASLSHSSHSSQSSSKKSSSVHSIPSTANRQNRPKSRESRDKQKYVQEERL) is disordered. A compositionally biased stretch (basic and acidic residues) spans 1150–1166 (KSRESRDKQKYVQEERL). Ser-1151 and Ser-1154 each carry phosphoserine; by PKG.

The protein belongs to the potassium channel family. Calcium-activated (TC 1.A.1.3) subfamily. KCa1.1/KCNMA1 sub-subfamily. In terms of assembly, homotetramer; which constitutes the calcium-activated potassium channel. Interacts with beta subunits KCNMB1, KCNMB2, KCNMB3 and KCNMB4. Interacts with gamma subunits LRRC26, LRRC38, LRRC52 and LRRC55. Beta and gamma subunits are accessory, and modulate its activity. Interacts with RAB11B. Phosphorylated. Stimulated by PKG, but not by PKA. In smooth muscles, phosphorylation affects its activity. In terms of processing, phosphorylated. Exclusively stimulated by PKA. In smooth muscles, phosphorylation affects its activity. Post-translationally, incremental phosphorylation of Thr-139 of the KCNMA1 tetramer changes the response to ethanol from increased activation to inhibition of channel activity. Palmitoylation by ZDHHC22 and ZDHHC23 within the intracellular linker between the S0 and S1 transmembrane domains regulates localization to the plasma membrane. Depalmitoylated by LYPLA1 and LYPLAL1, leading to retard exit from the trans-Golgi network.

It is found in the cell membrane. It carries out the reaction K(+)(in) = K(+)(out). Ethanol and carbon monoxide-bound heme increase channel activation. Heme inhibits channel activation. Phosphorylation of Thr-139 leads to inhibition of channel activity by ethanol. Its function is as follows. Potassium channel activated by both membrane depolarization or increase in cytosolic Ca(2+) that mediates export of K(+). It is also activated by concentration of cytosolic Mg(2+). Its activation dampens the excitatory events that elevate the cytosolic Ca(2+) concentration and/or depolarize the cell membrane. It therefore contributes to repolarization of the membrane potential. Plays a key role in controlling excitability in a number of systems, such as regulation of the contraction of smooth muscle, the tuning of hair cells in the cochlea, regulation of transmitter release, and innate immunity. In smooth muscles, its activation by high level of Ca(2+), caused by ryanodine receptors in the sarcoplasmic reticulum, regulates the membrane potential. In cochlea cells, its number and kinetic properties partly determine the characteristic frequency of each hair cell and thereby helps to establish a tonotopic map. Kinetics of KCNMA1 channels are determined by alternative splicing, phosphorylation status and its combination with modulating beta subunits. Highly sensitive to both iberiotoxin (IbTx) and charybdotoxin (CTX). The protein is Calcium-activated potassium channel subunit alpha-1 (KCNMA1) of Bos taurus (Bovine).